A 486-amino-acid chain; its full sequence is Aspartyl/glutamyl-tRNA(Asn/Gln) amidotransferase subunit B (486 aa).

The protein belongs to the GatB/GatE family. GatB subfamily. As to quaternary structure, heterotrimer of A, B and C subunits.

The enzyme catalyses L-glutamyl-tRNA(Gln) + L-glutamine + ATP + H2O = L-glutaminyl-tRNA(Gln) + L-glutamate + ADP + phosphate + H(+). It carries out the reaction L-aspartyl-tRNA(Asn) + L-glutamine + ATP + H2O = L-asparaginyl-tRNA(Asn) + L-glutamate + ADP + phosphate + 2 H(+). In terms of biological role, allows the formation of correctly charged Asn-tRNA(Asn) or Gln-tRNA(Gln) through the transamidation of misacylated Asp-tRNA(Asn) or Glu-tRNA(Gln) in organisms which lack either or both of asparaginyl-tRNA or glutaminyl-tRNA synthetases. The reaction takes place in the presence of glutamine and ATP through an activated phospho-Asp-tRNA(Asn) or phospho-Glu-tRNA(Gln). The protein is Aspartyl/glutamyl-tRNA(Asn/Gln) amidotransferase subunit B of Janthinobacterium sp. (strain Marseille) (Minibacterium massiliensis).